A 228-amino-acid chain; its full sequence is Lipoprotein LpqN (228 aa).

The N-terminal stretch at 1 to 19 (MKHFTAAVATVALSLALAG) is a signal peptide. Cys20 carries N-palmitoyl cysteine lipidation. A lipid anchor (S-diacylglycerol cysteine) is attached at Cys20. Residues 26–53 (TDSAPTTSPTTTSPTTSTTTTSATTSAQ) are disordered. Low complexity predominate over residues 28–52 (SAPTTSPTTTSPTTSTTTTSATTSA).

In terms of assembly, interacts with the periplasmic loop domains of the mycolate transporters MmpL3 and MmpL11. Also interacts with secreted cell envelope biosynthetic enzymes such as Ag85A. These interactions are weak and may require a putative mycobacterial adapter protein or molecule. Interacts with human ubiquitin ligase CBL.

It localises to the cell membrane. The protein localises to the secreted. In terms of biological role, involved in cell envelope biogenesis. May act as a membrane fusion protein, connecting MmpL transporters with periplasmic proteins, and play a role in cell envelope lipid changes during biofilm maturation. Its function is as follows. Is also a virulence factor required for intracellular survival. Associates with CBL, a host ubiquitin ligase, and probably blocks the normal functions of CBL and disturbs CBL-mediated antibacterial activity. Interaction counteracts antibacterial defense but causes a reciprocal enhancement of antiviral defense. The sequence is that of Lipoprotein LpqN from Mycobacterium tuberculosis (strain ATCC 25618 / H37Rv).